We begin with the raw amino-acid sequence, 34 residues long: Photosystem II reaction center protein M (34 aa).

A helical transmembrane segment spans residues 5 to 25 (ILAFIATALFILVPTAFLLII).

It belongs to the PsbM family. As to quaternary structure, PSII is composed of 1 copy each of membrane proteins PsbA, PsbB, PsbC, PsbD, PsbE, PsbF, PsbH, PsbI, PsbJ, PsbK, PsbL, PsbM, PsbT, PsbX, PsbY, PsbZ, Psb30/Ycf12, at least 3 peripheral proteins of the oxygen-evolving complex and a large number of cofactors. It forms dimeric complexes.

It is found in the plastid. It localises to the chloroplast thylakoid membrane. Its function is as follows. One of the components of the core complex of photosystem II (PSII). PSII is a light-driven water:plastoquinone oxidoreductase that uses light energy to abstract electrons from H(2)O, generating O(2) and a proton gradient subsequently used for ATP formation. It consists of a core antenna complex that captures photons, and an electron transfer chain that converts photonic excitation into a charge separation. This subunit is found at the monomer-monomer interface. This chain is Photosystem II reaction center protein M, found in Buxus microphylla (Littleleaf boxwood).